The primary structure comprises 232 residues: MSIHIGAKEGDIAETVLLPGDPLRAKYIAENLLEDAKCYNEVRGMYGFTGYYKGKRVSVQGTGMGVPSISIYVNELITSYGVKNLIRIGTCGSLQPDIKIRDIVIAMSASTDSAINKIRFNGMDYAPTASFKLLKKAYDKAVEMGIEPKVGNILTTDTFYHDDPESWRLWAKFGVLAVEMETAGLYTLAAKYGVDALTILTVSDSLVTGEATSAEERQKTFMDMVKIALEIA.

His4 is an a purine D-ribonucleoside binding site. Phosphate contacts are provided by residues Gly20, Arg24, Arg43, and 87-90 (RIGT). Residues 179–181 (EME) and 203–204 (SD) each bind a purine D-ribonucleoside. Asp204 acts as the Proton donor in catalysis.

This sequence belongs to the PNP/UDP phosphorylase family. Homohexamer; trimer of homodimers.

The enzyme catalyses a purine D-ribonucleoside + phosphate = a purine nucleobase + alpha-D-ribose 1-phosphate. The catalysed reaction is a purine 2'-deoxy-D-ribonucleoside + phosphate = a purine nucleobase + 2-deoxy-alpha-D-ribose 1-phosphate. Its function is as follows. Catalyzes the reversible phosphorolytic breakdown of the N-glycosidic bond in the beta-(deoxy)ribonucleoside molecules, with the formation of the corresponding free purine bases and pentose-1-phosphate. This is Purine nucleoside phosphorylase DeoD-type from Caldanaerobacter subterraneus subsp. tengcongensis (strain DSM 15242 / JCM 11007 / NBRC 100824 / MB4) (Thermoanaerobacter tengcongensis).